Here is a 179-residue protein sequence, read N- to C-terminus: MTLKNRYKESIRPKLLKELGLKNIHQVPKVVKVNVNRGLGEAASNSKALEASLNEMATITGQKALVTRAKKAIAGFKIREGMPIGCTVTLRGDRMYSFLERFINLALPRIRDFRGVNPKSFDGRGNYTVGVKEQLIFPEISFDKIDSIRGMDITIVTSARSDQEGKALLQELGMPFSKN.

It belongs to the universal ribosomal protein uL5 family. Part of the 50S ribosomal subunit; part of the 5S rRNA/L5/L18/L25 subcomplex. Contacts the 5S rRNA and the P site tRNA. Forms a bridge to the 30S subunit in the 70S ribosome.

Its function is as follows. This is one of the proteins that bind and probably mediate the attachment of the 5S RNA into the large ribosomal subunit, where it forms part of the central protuberance. In the 70S ribosome it contacts protein S13 of the 30S subunit (bridge B1b), connecting the 2 subunits; this bridge is implicated in subunit movement. Contacts the P site tRNA; the 5S rRNA and some of its associated proteins might help stabilize positioning of ribosome-bound tRNAs. The protein is Large ribosomal subunit protein uL5 of Prochlorococcus marinus (strain MIT 9215).